We begin with the raw amino-acid sequence, 293 residues long: 4-diphosphocytidyl-2-C-methyl-D-erythritol kinase (293 aa).

Residue lysine 16 is part of the active site. 99 to 109 (PMGAGLGGGSS) is a binding site for ATP. The active site involves aspartate 141.

This sequence belongs to the GHMP kinase family. IspE subfamily.

It carries out the reaction 4-CDP-2-C-methyl-D-erythritol + ATP = 4-CDP-2-C-methyl-D-erythritol 2-phosphate + ADP + H(+). Its pathway is isoprenoid biosynthesis; isopentenyl diphosphate biosynthesis via DXP pathway; isopentenyl diphosphate from 1-deoxy-D-xylulose 5-phosphate: step 3/6. Its function is as follows. Catalyzes the phosphorylation of the position 2 hydroxy group of 4-diphosphocytidyl-2C-methyl-D-erythritol. This is 4-diphosphocytidyl-2-C-methyl-D-erythritol kinase from Paraburkholderia phymatum (strain DSM 17167 / CIP 108236 / LMG 21445 / STM815) (Burkholderia phymatum).